The sequence spans 1081 residues: SPX and EXS domain-containing protein 4 (1081 aa).

An SPX domain is found at 1–483; sequence MKFRDLLNDH…RIISSECRKY (483 aa). Disordered stretches follow at residues 86–118, 160–271, and 318–354; these read ETAD…SVGF, QRNN…HDKN, and VKGD…DEDN. 3 stretches are compositionally biased toward low complexity: residues 90 to 110, 161 to 196, and 211 to 228; these read SPAI…NNNN, RNNN…TRNI, and SPFS…SPSP. Residues 244 to 264 are compositionally biased toward acidic residues; the sequence is KDEDEEEEGEEEEDIEMEQLE. The segment covering 319–336 has biased composition (basic and acidic residues); sequence KGDKSNDKNNDKSNDKNN. Positions 337 to 349 are enriched in low complexity; it reads NKNNKNNNNNNNL. 9 helical membrane passes run 536–556, 573–593, 622–642, 654–674, 703–723, 776–796, 803–823, 854–874, and 887–907; these read NLFT…QVVF, LAWL…MFSL, YLKY…LYID, ILIP…PFPI, FFMS…QSMV, ITSA…YIAL, WSII…YKFY, WIYY…LIIF, and PLFL…FIFF. Positions 738 to 940 constitute an EXS domain; sequence FCSQSRFFAL…SQEYNNYMDE (203 aa). The disordered stretch occupies residues 939–1031; that stretch reads DEKKKRRKRK…INDHMNPDTG (93 aa). Basic residues predominate over residues 942–951; it reads KKRRKRKQKQ. Residues 952–970 are compositionally biased toward low complexity; it reads SKSNNNNNNNNNNNNNNNN. Positions 977-1003 are enriched in polar residues; it reads SSNNVETDETITSSNNTDSSHQKQPLT. Over residues 1013–1022 the composition is skewed to basic and acidic residues; the sequence is NHQDHHDLSI.

It belongs to the SYG1 (TC 2.A.94) family.

The protein localises to the membrane. The protein is SPX and EXS domain-containing protein 4 of Dictyostelium discoideum (Social amoeba).